A 991-amino-acid chain; its full sequence is Integrator complex subunit 8 (991 aa).

Basic and acidic residues predominate over residues 1–10; sequence MSAEAADREA. Residues 1-22 are disordered; that stretch reads MSAEAADREAATSSRPCTPPQT. Residues 11-22 show a composition bias toward polar residues; that stretch reads ATSSRPCTPPQT. A WFEF motif motif is present at residues 24 to 29; it reads WFEFLL. TPR repeat units lie at residues 250–288, 319–355, 569–602, and 829–862; these read CQGCYDLGAVYFLQGPTNPSCYEKARDHFFRTKQLVSKI, SQPATPYSQIHNFMKTNNYQGILKIFLEDHLNNSLPD, VYILLAKGLHCSAIKDYPRAKQLLSACLELVTEF, and HSWLTIQADIYFATNEYSAALNYYLQAGAVCSDF.

The protein belongs to the Integrator subunit 8 family. Component of the Integrator complex, composed of core subunits INTS1, INTS2, INTS3, INTS4, INTS5, INTS6, INTS7, INTS8, INTS9/RC74, INTS10, INTS11/CPSF3L, INTS12, INTS13, INTS14 and INTS15. The core complex associates with protein phosphatase 2A subunits PPP2CA and PPP2R1A, to form the Integrator-PP2A (INTAC) complex.

It is found in the nucleus. The protein localises to the chromosome. In terms of biological role, component of the integrator complex, a multiprotein complex that terminates RNA polymerase II (Pol II) transcription in the promoter-proximal region of genes. The integrator complex provides a quality checkpoint during transcription elongation by driving premature transcription termination of transcripts that are unfavorably configured for transcriptional elongation: the complex terminates transcription by (1) catalyzing dephosphorylation of the C-terminal domain (CTD) of Pol II subunit POLR2A/RPB1 and SUPT5H/SPT5, (2) degrading the exiting nascent RNA transcript via endonuclease activity and (3) promoting the release of Pol II from bound DNA. The integrator complex is also involved in terminating the synthesis of non-coding Pol II transcripts, such as enhancer RNAs (eRNAs), small nuclear RNAs (snRNAs), telomerase RNAs and long non-coding RNAs (lncRNAs). Within the integrator complex, INTS8 is required for the recruitment of protein phosphatase 2A (PP2A) to transcription pause-release checkpoint. This Xenopus laevis (African clawed frog) protein is Integrator complex subunit 8 (ints8).